The chain runs to 178 residues: Probable DNA-directed RNA polymerase subunit delta (178 aa).

The region spanning 14–81 (LSLIDVAHFI…GNNTWGLRAW (68 aa)) is the HTH HARE-type domain. Disordered stretches follow at residues 88 to 122 (DEEVQTQTTPKKKRKSDDDEDEDEEILDDDVDYDD) and 141 to 178 (LDEDEDDDDHLPDGIEGDLATVEDDYTDGDYTEDPEDK). Acidic residues-rich tracts occupy residues 105–122 (DDEDEDEEILDDDVDYDD), 141–150 (LDEDEDDDDH), and 161–178 (TVEDDYTDGDYTEDPEDK).

This sequence belongs to the RpoE family. As to quaternary structure, RNAP is composed of a core of 2 alpha, a beta and a beta' subunits. The core is associated with a delta subunit and one of several sigma factors.

In terms of biological role, participates in both the initiation and recycling phases of transcription. In the presence of the delta subunit, RNAP displays an increased specificity of transcription, a decreased affinity for nucleic acids, and an increased efficiency of RNA synthesis because of enhanced recycling. This Listeria monocytogenes serovar 1/2a (strain ATCC BAA-679 / EGD-e) protein is Probable DNA-directed RNA polymerase subunit delta.